Here is a 591-residue protein sequence, read N- to C-terminus: Aspartate--tRNA ligase (591 aa).

Residue Glu172 coordinates L-aspartate. Residues 196-199 (QLFK) form an aspartate region. Arg218 contacts L-aspartate. ATP-binding positions include 218–220 (RDE) and Gln227. His449 provides a ligand contact to L-aspartate. Glu483 contributes to the ATP binding site. Arg490 serves as a coordination point for L-aspartate. 535-538 (GLDR) is an ATP binding site.

It belongs to the class-II aminoacyl-tRNA synthetase family. Type 1 subfamily. Homodimer.

The protein localises to the cytoplasm. The enzyme catalyses tRNA(Asp) + L-aspartate + ATP = L-aspartyl-tRNA(Asp) + AMP + diphosphate. In terms of biological role, catalyzes the attachment of L-aspartate to tRNA(Asp) in a two-step reaction: L-aspartate is first activated by ATP to form Asp-AMP and then transferred to the acceptor end of tRNA(Asp). This chain is Aspartate--tRNA ligase, found in Actinobacillus pleuropneumoniae serotype 7 (strain AP76).